The chain runs to 519 residues: ATP synthase subunit beta, mitochondrial (519 aa).

Residues 1–21 (MLTRFRSAVLRGAVSITGARA) constitute a mitochondrion transit peptide. ATP contacts are provided by residues 184–191 (GAGVGKTV) and Arg-216.

The protein belongs to the ATPase alpha/beta chains family. As to quaternary structure, F-type ATPases have 2 components, F(1) - the catalytic core - and F(o) - the membrane proton channel. F(1) has five subunits: alpha(3), beta(3), gamma(1), delta(1), epsilon(1), plus the additional subunit P18 (Tb427.05.1710) that is not present in F(1)F(o) ATP synthase from metazoa. Subunit P18 (Tb927.5.1710) interacts with the alpha subunit with a 1:1 stoichiometry; the interaction is direct. Subunit gamma is part of the central stalk. F(o) has three main subunits: a, b and c. The trypanosomal ATPase complex contains additional subunits that are not present in the F(1)F(o) ATP synthase from metazoa.

It localises to the mitochondrion. The protein resides in the mitochondrion inner membrane. The catalysed reaction is ATP + H2O + 4 H(+)(in) = ADP + phosphate + 5 H(+)(out). In terms of biological role, mitochondrial membrane ATP synthase (F(1)F(o) ATP synthase) produces ATP from ADP in the presence of a proton gradient across the membrane which is generated by electron transport complexes of the respiratory chain. F-type ATPases consist of two structural domains, F(1) - containing the extramembraneous catalytic core, and F(o) - containing the membrane proton channel, linked together by a central stalk and a peripheral stalk. During catalysis, ATP synthesis in the catalytic domain of F(1) is coupled via a rotary mechanism of the central stalk subunits to proton translocation. Subunits alpha and beta form the catalytic core in F(1). Rotation of the central stalk against the surrounding alpha(3)beta(3) subunits leads to hydrolysis of ATP in three separate catalytic sites on the beta subunits. Contrary to the procyclic, insect form that requires F(1)F(o) ATP synthase for ATP synthesis, the bloodstream form relies on ATP hydrolysis by F(1)F(o) ATP synthase to maintain its mitochondrial membrane potential. This Trypanosoma brucei brucei protein is ATP synthase subunit beta, mitochondrial.